Here is a 351-residue protein sequence, read N- to C-terminus: MEKQNFVVLKNICKRFGSNTVIGNLDLEIKKGSLVTLLGPSGCGKTTVLRLVAGLEKPTSGQIFIDGEDVTERSIQQRDICMVFQSYALFPHMSLYENVAYGLKMLKLPSEEVRQRVDEALKIVDLEGMGERYVDQISGGQQQRVALARALVLKPKVLLFDEPLSNLDANLRRSMRETIRELQQRFDITSLYVTHDQAEAFAVSDTVIVMKQGDIMQIGTPQELYKAPKSMFMANFMGEANMFQGHFDGQQIHINGYAIDADLEVTRDKPNGEYQIGVRPEAITLHTQGSESQACQILKSAYMGSMYEVTVKWHDQELLLQLNSAQFNHTLTQHAYVVFNPRGLFLLPYAE.

The ABC transporter domain maps to 7–237; it reads VVLKNICKRF…PKSMFMANFM (231 aa). Residue 39–46 coordinates ATP; that stretch reads GPSGCGKT.

This sequence belongs to the ABC transporter superfamily. Fe(3+) ion importer (TC 3.A.1.10) family. In terms of assembly, the complex is composed of two ATP-binding proteins (FbpC), two transmembrane proteins (FbpB) and a solute-binding protein (FbpA).

The protein resides in the cell inner membrane. It catalyses the reaction Fe(3+)(out) + ATP + H2O = Fe(3+)(in) + ADP + phosphate + H(+). In terms of biological role, part of the ABC transporter complex FbpABC involved in Fe(3+) ions import. Responsible for energy coupling to the transport system. This is Fe(3+) ions import ATP-binding protein FbpC from Vibrio cholerae serotype O1 (strain ATCC 39315 / El Tor Inaba N16961).